We begin with the raw amino-acid sequence, 429 residues long: Glutamate-1-semialdehyde 2,1-aminomutase (429 aa).

K272 is modified (N6-(pyridoxal phosphate)lysine).

Belongs to the class-III pyridoxal-phosphate-dependent aminotransferase family. HemL subfamily. Pyridoxal 5'-phosphate serves as cofactor.

It is found in the cytoplasm. The catalysed reaction is (S)-4-amino-5-oxopentanoate = 5-aminolevulinate. Its pathway is porphyrin-containing compound metabolism; protoporphyrin-IX biosynthesis; 5-aminolevulinate from L-glutamyl-tRNA(Glu): step 2/2. The sequence is that of Glutamate-1-semialdehyde 2,1-aminomutase from Methanothrix thermoacetophila (strain DSM 6194 / JCM 14653 / NBRC 101360 / PT) (Methanosaeta thermophila).